The chain runs to 311 residues: MTRLIFMGTPQFSATVLQGLLENPAYDILAVVTQPDRAVGRKKDITMTPVKKLALAHQLPVFQPEKLSGSQELADIMALGADGIVTAAFGQFLPTVLLDSVTFAVNVHASLLPKYRGGAPIHYAIINGDKEAGVTIMEMVKEMDAGDMISSASLPILDTDNVGTMFDKLAILGRDLLLKTLPDYLSGDLKPVPQDHSQATFSPNLSAEEERLDWSKPAREVFNHIRGMNPWPVAHTLLDGQRFKIYEAELAEGSGSAGQIIAKTKKALVVAAGEGALSLTLVQPAGKPKMPIVDFLNGIGRSLEVGDVLGE.

110–113 serves as a coordination point for (6S)-5,6,7,8-tetrahydrofolate; it reads SLLP.

Belongs to the Fmt family.

It carries out the reaction L-methionyl-tRNA(fMet) + (6R)-10-formyltetrahydrofolate = N-formyl-L-methionyl-tRNA(fMet) + (6S)-5,6,7,8-tetrahydrofolate + H(+). Its function is as follows. Attaches a formyl group to the free amino group of methionyl-tRNA(fMet). The formyl group appears to play a dual role in the initiator identity of N-formylmethionyl-tRNA by promoting its recognition by IF2 and preventing the misappropriation of this tRNA by the elongation apparatus. The sequence is that of Methionyl-tRNA formyltransferase from Streptococcus equi subsp. zooepidemicus (strain H70).